Here is a 234-residue protein sequence, read N- to C-terminus: MKIIRVQDQLEGGKVAFSLLKESLAEGATTLGLATGSTPITFYQELVNSDLDCSALTSINLDEYVGLPVENDQSYDYFMRDQLFNAKPFKESFLPNGLADDLEAEVKRYDQVIAEHPIDFQILGIGRNGHIGFNEPGTPFAEKTHVVDLQASTIEANSRFFASIDDVPKQAISMGIASIMASKMIVLLAFGKEKAAAIKGMVSGPVTEALPASVLQQHDHVVVIVDEAAASELD.

D62 acts as the Proton acceptor; for enolization step in catalysis. Residue N128 is the For ring-opening step of the active site. H130 (proton acceptor; for ring-opening step) is an active-site residue. E135 acts as the For ring-opening step in catalysis.

This sequence belongs to the glucosamine/galactosamine-6-phosphate isomerase family. NagB subfamily.

It carries out the reaction alpha-D-glucosamine 6-phosphate + H2O = beta-D-fructose 6-phosphate + NH4(+). Its pathway is amino-sugar metabolism; N-acetylneuraminate degradation; D-fructose 6-phosphate from N-acetylneuraminate: step 5/5. Catalyzes the reversible isomerization-deamination of glucosamine 6-phosphate (GlcN6P) to form fructose 6-phosphate (Fru6P) and ammonium ion. This chain is Glucosamine-6-phosphate deaminase, found in Streptococcus equi subsp. zooepidemicus (strain H70).